Consider the following 64-residue polypeptide: MLCLPVFIILLLLASPAAPNPLQTRIQSNLIRAGPEDANIKTDKRVISGLLASILVPLIDAIIG.

The first 19 residues, 1 to 19 (MLCLPVFIILLLLASPAAP), serve as a signal peptide directing secretion. Residues 20 to 43 (NPLQTRIQSNLIRAGPEDANIKTD) constitute a propeptide that is removed on maturation. At isoleucine 63 the chain carries Isoleucine amide.

The protein belongs to the conotoxin T superfamily. As to expression, expressed by the venom duct.

It localises to the secreted. The sequence is that of Conotoxin VnMLCL-033 from Conus ventricosus (Mediterranean cone).